The primary structure comprises 57 residues: MKRSRTEVGRWRMQRQASRRKSRWLEGQSRRNMRIHSIRKCILNKQRNSLLFAIYNI.

A compositionally biased stretch (basic and acidic residues) spans 1–10; the sequence is MKRSRTEVGR. Residues 1–25 are disordered; that stretch reads MKRSRTEVGRWRMQRQASRRKSRWL.

The protein belongs to the YciY family.

This is an uncharacterized protein from Escherichia coli O1:K1 / APEC.